Reading from the N-terminus, the 169-residue chain is Cell division inhibitor SulA (169 aa).

A ftsZ binding region spans residues 106 to 112 (ALRTGNY). Positions 162–169 (KIHSNLYH) are lon protease binding.

This sequence belongs to the SulA family. As to quaternary structure, interacts with FtsZ. In terms of processing, is rapidly cleaved and degraded by the Lon protease once DNA damage is repaired.

Its function is as follows. Component of the SOS system and an inhibitor of cell division. Accumulation of SulA causes rapid cessation of cell division and the appearance of long, non-septate filaments. In the presence of GTP, binds a polymerization-competent form of FtsZ in a 1:1 ratio, thus inhibiting FtsZ polymerization and therefore preventing it from participating in the assembly of the Z ring. This mechanism prevents the premature segregation of damaged DNA to daughter cells during cell division. In Shigella boydii serotype 18 (strain CDC 3083-94 / BS512), this protein is Cell division inhibitor SulA.